A 148-amino-acid polypeptide reads, in one-letter code: uncharacterized protein (148 aa).

The HTH asnC-type domain maps to 2-63 (LDELDKRILY…LINPFKAGYE (62 aa)). The H-T-H motif DNA-binding region spans 21-40 (YSEIARILGVPESTVRVRVK).

This is an uncharacterized protein from Pyrococcus furiosus (strain ATCC 43587 / DSM 3638 / JCM 8422 / Vc1).